We begin with the raw amino-acid sequence, 390 residues long: Neuromedin-B receptor (390 aa).

The disordered stretch occupies residues 1-20 (MPPRSLPNLSLPTEASESEL). Over 1–41 (MPPRSLPNLSLPTEASESELEPEVWENDFLPDSDGTTAELV) the chain is Extracellular. N8 is a glycosylation site (N-linked (GlcNAc...) asparagine). A helical transmembrane segment spans residues 42 to 65 (IRCVIPSLYLIIISVGLLGNIMLV). Topologically, residues 66-79 (KIFLTNSTMRSVPN) are cytoplasmic. Residues 80–99 (IFISNLAAGDLLLLLTCVPV) form a helical membrane-spanning segment. Over 100 to 117 (DASRYFFDEWVFGKLGCK) the chain is Extracellular. Cysteines 116 and 198 form a disulfide. The chain crosses the membrane as a helical span at residues 118–139 (LIPAIQLTSVGVSVFTLTALSA). Over 140-156 (DRYRAIVNPMDMQTSGV) the chain is Cytoplasmic. Residues 157 to 177 (VLWTSLKAVGIWVVSVLLAVP) form a helical membrane-spanning segment. Over 178–211 (EAVFSEVARIGSSDNSSFTACIPYPQTDELHPKI) the chain is Extracellular. A glycan (N-linked (GlcNAc...) asparagine) is linked at N192. The helical transmembrane segment at 212–235 (HSVLIFLVYFLIPLVIISIYYYHI) threads the bilayer. The Cytoplasmic segment spans residues 236–266 (AKTLIRSAHNLPGEYNEHTKKQMETRKRLAK). The helical transmembrane segment at 267–287 (IVLVFVGCFVFCWFPNHILYL) threads the bilayer. The Extracellular portion of the chain corresponds to 288-299 (YRSFNYKEIDPS). Residues 300–327 (LGHMIVTLVARVLSFSNSCVNPFALYLL) traverse the membrane as a helical segment. The Cytoplasmic portion of the chain corresponds to 328 to 390 (SESFRKHFNS…GHSTKQEIAL (63 aa)). The S-palmitoyl cysteine moiety is linked to residue C341. Residue S352 is modified to Phosphoserine.

It belongs to the G-protein coupled receptor 1 family. Brain (olfactory bulb and central thalamic regions), and esophagus.

It is found in the cell membrane. Functionally, receptor for neuromedin-B. Contributes to the maintenance of basal sigh rate through signaling in the pre-Botzinger complex, a cluster of several thousand neurons in the ventrolateral medulla responsible for inspiration during respiratory activity. Contributes to the induction of sneezing following exposure to chemical irritants or allergens which causes release of NMB by nasal sensory neurons and activation of NMBR-expressing neurons in the sneeze-evoking region of the brainstem. These in turn activate neurons of the caudal ventral respiratory group, giving rise to the sneezing response. Contributes to induction of acute itch, possibly through its activation on dorsal root ganglion neurons by the NMB peptide. Plays a role in the innate immune response to influenza A virus infection by enhancing interferon alpha expression and reducing expression of IL6. Plays a role in CSF1-induced proliferation of osteoclast precursors by contributing to the positive regulation of the expression of the CSF1 receptor CSF1R. This Rattus norvegicus (Rat) protein is Neuromedin-B receptor (Nmbr).